The chain runs to 275 residues: Diaminopimelate epimerase (275 aa).

3 residues coordinate substrate: N12, Q45, and N65. Residue C74 is the Proton donor of the active site. Residues 75-76, N158, N191, and 209-210 contribute to the substrate site; these read GN and ER. The active-site Proton acceptor is the C218. Residue 219–220 coordinates substrate; sequence GT.

The protein belongs to the diaminopimelate epimerase family. As to quaternary structure, homodimer.

It localises to the cytoplasm. The catalysed reaction is (2S,6S)-2,6-diaminopimelate = meso-2,6-diaminopimelate. It participates in amino-acid biosynthesis; L-lysine biosynthesis via DAP pathway; DL-2,6-diaminopimelate from LL-2,6-diaminopimelate: step 1/1. Catalyzes the stereoinversion of LL-2,6-diaminopimelate (L,L-DAP) to meso-diaminopimelate (meso-DAP), a precursor of L-lysine and an essential component of the bacterial peptidoglycan. In Shewanella sp. (strain MR-4), this protein is Diaminopimelate epimerase.